Reading from the N-terminus, the 814-residue chain is Exostosin-like-3 homolog (814 aa).

Residues 1 to 14 lie on the Cytoplasmic side of the membrane; it reads MAIKLNGSSRSFVP. A helical; Signal-anchor for type II membrane protein membrane pass occupies residues 15 to 35; it reads SLRVSAFLIFIFFVITYIIIY. 6 N-linked (GlcNAc...) asparagine glycosylation sites follow: asparagine 36, asparagine 227, asparagine 297, asparagine 322, asparagine 454, and asparagine 492. The Lumenal portion of the chain corresponds to 36–814; that stretch reads NVSFSEPSWI…QNHQKCFKYV (779 aa). UDP-N-acetyl-alpha-D-glucosamine contacts are provided by arginine 570, asparagine 595, asparagine 620, arginine 625, aspartate 641, aspartate 642, and aspartate 643. Aspartate 643 is a Mn(2+) binding site. Asparagine 685 is a glycosylation site (N-linked (GlcNAc...) asparagine). A disulfide bridge connects residues cysteine 726 and cysteine 774. UDP-N-acetyl-alpha-D-glucosamine contacts are provided by glutamate 727, aspartate 728, and arginine 771. Aspartate 728 is a catalytic residue.

This sequence belongs to the glycosyltransferase 47 family. In terms of assembly, interacts with rib-1. It depends on Mn(2+) as a cofactor.

It localises to the endoplasmic reticulum membrane. Its subcellular location is the golgi apparatus membrane. It catalyses the reaction 3-O-(beta-D-GlcA-(1-&gt;3)-beta-D-Gal-(1-&gt;3)-beta-D-Gal-(1-&gt;4)-beta-D-Xyl)-L-seryl-[protein] + UDP-N-acetyl-alpha-D-glucosamine = 3-O-(alpha-D-GlcNAc-(1-&gt;4)-beta-D-GlcA-(1-&gt;3)-beta-D-Gal-(1-&gt;3)-beta-D-Gal-(1-&gt;4)-beta-D-Xyl)-L-seryl-[protein] + UDP + H(+). The enzyme catalyses 3-O-{[(1-&gt;4)-beta-D-GlcA-(1-&gt;4)-alpha-D-GlcNAc](n)-(1-&gt;4)-beta-D-GlcA-(1-&gt;3)-beta-D-Gal-(1-&gt;3)-beta-D-Gal-(1-&gt;4)-beta-D-Xyl}-L-seryl-[protein] + UDP-N-acetyl-alpha-D-glucosamine = 3-O-{alpha-D-GlcNAc-[(1-&gt;4)-beta-D-GlcA-(1-&gt;4)-alpha-D-GlcNAc](n)-(1-&gt;4)-beta-D-GlcA-(1-&gt;3)-beta-D-Gal-(1-&gt;3)-beta-D-Gal-(1-&gt;4)-beta-D-Xyl}-L-seryl-[protein] + UDP + H(+). The catalysed reaction is 3-O-{alpha-D-GlcNAc-[(1-&gt;4)-beta-D-GlcA-(1-&gt;4)-alpha-D-GlcNAc](n)-(1-&gt;4)-beta-D-GlcA-(1-&gt;3)-beta-D-Gal-(1-&gt;3)-beta-D-Gal-(1-&gt;4)-beta-D-Xyl}-L-seryl-[protein] + UDP-alpha-D-glucuronate = 3-O-{[(1-&gt;4)-beta-D-GlcA-(1-&gt;4)-alpha-D-GlcNAc](n+1)-(1-&gt;4)-beta-D-GlcA-(1-&gt;3)-beta-D-Gal-(1-&gt;3)-beta-D-Gal-(1-&gt;4)-beta-D-Xyl}-L-seryl-[protein] + UDP + H(+). Its pathway is glycan metabolism; heparan sulfate biosynthesis. Its activity is regulated as follows. Binding to rib-1 is required for GlcAT-II activity and for increasing GlcNAc-II activity in vitro. Functionally, glycosyltransferase required for the biosynthesis of heparan sulfate. Initiates heparan sulfate synthesis by transferring GlcNAc to the (GlcA-Gal-Gal-Xyl-)Ser core linker (GlcNAcT-I activity). In association with rib-1, is also responsible for the alternating addition of beta-1-4-linked glucuronic acid (GlcA) and alpha-1-4-linked N-acetylglucosamine (GlcNAc) units to nascent heparan sulfate chains (GlcNAcT-II and GlcAT-II activities). Required for normal ventral epidermal enclosure during the early stages of embryonic development. In addition, involved in the elongation of the pharyngeal isthmus during the later stages of embryonic development. Involved in the directed migration of hermaphrodite-specific neurons. The polypeptide is Exostosin-like-3 homolog (rib-2) (Caenorhabditis elegans).